A 761-amino-acid polypeptide reads, in one-letter code: Zinc finger protein 711 (761 aa).

Residues lysine 224, lysine 235, and lysine 296 each participate in a glycyl lysine isopeptide (Lys-Gly) (interchain with G-Cter in SUMO2) cross-link. 5 C2H2-type zinc fingers span residues 383-408 (YPCHICTKKFKSRGFLKRHMKNHPDH), 414-436 (YQCTDCDFTTNKKVSFHNHLESH), 476-499 (HKCKYCDYETAEQGLLNRHLLAVH), 505-527 (HVCVECGKGFRHPSELKKHMRTH), and 533-556 (YQCQYCIFRCADQSNLKTHIKSKH). The segment at 515–761 (RHPSELKKHM…IMRHHKEALM (247 aa)) is required for transcriptional activation. A C2H2-type 6; atypical zinc finger spans residues 562–584 (YKCEHCPQAFGDERELQRHLDLF). Residues cysteine 564, cysteine 567, and histidine 580 each contribute to the Zn(2+) site. 6 consecutive C2H2-type zinc fingers follow at residues 590 to 613 (HQCPHCDHKSTNSSDLKRHIISVH), 619 to 641 (HKCEVCDKGFHRPSELKKHSDIH), 647 to 670 (HQCRHCDFKTSDPFILSGHILSVH), 676 to 698 (LKCKRCKRGFRQQNELKKHMKTH), 704 to 727 (YQCEYCEYSTTDASGFKRHVISIH), and 733 to 755 (HRCEFCKKGFRRPSEKNQHIMRH).

It belongs to the krueppel C2H2-type zinc-finger protein family. Interacts with PHF8. In terms of tissue distribution, expressed in neural tissues.

The protein localises to the nucleus. In terms of biological role, transcription regulator required for brain development. Probably acts as a transcription factor that binds to the promoter of target genes and recruits PHF8 histone demethylase, leading to activated expression of genes involved in neuron development, such as KDM5C. May compete with transcription factor ARX for activation of expression of KDM5C. This Homo sapiens (Human) protein is Zinc finger protein 711 (ZNF711).